Here is a 598-residue protein sequence, read N- to C-terminus: F-box/WD repeat-containing protein 8 (598 aa).

N-acetylmethionine is present on methionine 1. Residues serine 20–proline 97 form a disordered region. Positions leucine 29–alanine 44 are enriched in basic and acidic residues. A compositionally biased stretch (low complexity) spans glycine 51–arginine 65. The span at arginine 73–threonine 93 shows a compositional bias: basic and acidic residues. Serine 84 is modified (phosphoserine). At serine 86 the chain carries Phosphoserine; by MTOR. The 47-residue stretch at proline 113 to leucine 159 folds into the F-box domain. WD repeat units lie at residues alanine 201–glutamate 250, glutamine 259–aspartate 299, alanine 300–glutamate 340, valine 341–valine 383, tyrosine 384–glycine 429, asparagine 430–glutamine 475, leucine 476–serine 513, and arginine 514–phenylalanine 561.

Component of the Cul7-RING(FBXW8) complex consisting of CUL7, RBX1, SKP1 and FBXW8; within the complex interacts with CUL7 and SKP1. Interacts with GLMN isoform 1. Interacts with OBSL1, CUL1, CUL2, CCT6B, PFDN5, CCT2, CCT3, CCT6A, CCT7, VBP1, CCDC8, ARF1, TRIP13, PDCD5 and GORASP1. Interacts with MAP4K1/HPK1 (when autophosphorylated). Associated component of the 3M complex. Interacts with POUF51 (when phosphorylated on 'Ser-347'). In terms of processing, phosphorylation at Ser-86 by mTORC2 promotes FBXW8 stabilization, allowing its translocation to the cytosol in response to insulin. Widely expressed. Expressed at higher level in skeletal muscle, cartilage and lung.

It is found in the cytoplasm. The protein localises to the perinuclear region. The protein resides in the golgi apparatus. Its subcellular location is the cytosol. The protein operates within protein modification; protein ubiquitination. Substrate-recognition component of the Cul7-RING(FBXW8) ubiquitin ligase complex, which mediates the ubiquitination and subsequent proteasomal degradation of target proteins. The Cul7-RING(FBXW8) complex mediates ubiquitination and consequent degradation of GORASP1, acting as a component of the ubiquitin ligase pathway that regulates Golgi morphogenesis and dendrite patterning in brain. Mediates ubiquitination and degradation of IRS1 in a mTOR-dependent manner: the Cul7-RING(FBXW8) complex recognizes and binds IRS1 previously phosphorylated by S6 kinase (RPS6KB1 or RPS6KB2). The Cul7-RING(FBXW8) complex also mediates ubiquitination of MAP4K1/HPK1: recognizes and binds autophosphorylated MAP4K1/HPK1, leading to its degradation, thereby affecting cell proliferation and differentiation. The Cul7-RING(FBXW8) complex also mediates ubiquitination of phosphorylated cyclin-D1 (CCND1). The Cul7-RING(FBXW8) complex is however not a major regulator of CCND1 stability during the G1/S transition. Associated component of the 3M complex, suggesting that it mediates some of 3M complex functions. This chain is F-box/WD repeat-containing protein 8 (Fbxw8), found in Mus musculus (Mouse).